The sequence spans 210 residues: Cytidylate kinase (210 aa).

7–15 contacts ATP; it reads GPAASGKGT.

Belongs to the cytidylate kinase family. Type 1 subfamily.

It localises to the cytoplasm. The enzyme catalyses CMP + ATP = CDP + ADP. The catalysed reaction is dCMP + ATP = dCDP + ADP. This chain is Cytidylate kinase, found in Methylobacterium sp. (strain 4-46).